The sequence spans 296 residues: Protease HtpX homolog (296 aa).

Helical transmembrane passes span 7 to 27 and 29 to 49; these read TVLLLGVLTGLFLAIGHLVAG and QGMIIAFVVALFMNFFSYFFS. His-131 is a Zn(2+) binding site. Glu-132 is an active-site residue. Residue His-135 participates in Zn(2+) binding. Transmembrane regions (helical) follow at residues 141–161 and 178–198; these read ILISSIAATIGGAISMLANMA and IASIIGSIILFIVAPLAATLI. Glu-207 serves as a coordination point for Zn(2+).

It belongs to the peptidase M48B family. Requires Zn(2+) as cofactor.

The protein localises to the cell inner membrane. In Sulfurihydrogenibium sp. (strain YO3AOP1), this protein is Protease HtpX homolog.